Here is a 486-residue protein sequence, read N- to C-terminus: Malonate-semialdehyde dehydrogenase 1 (486 aa).

Positions 154, 178, 181, 182, and 231 each coordinate NAD(+). The Nucleophile role is filled by C286. Residue E386 coordinates NAD(+).

Belongs to the aldehyde dehydrogenase family. IolA subfamily. Homotetramer.

It catalyses the reaction 3-oxopropanoate + NAD(+) + CoA + H2O = hydrogencarbonate + acetyl-CoA + NADH + H(+). It carries out the reaction 2-methyl-3-oxopropanoate + NAD(+) + CoA + H2O = propanoyl-CoA + hydrogencarbonate + NADH + H(+). The protein operates within polyol metabolism; myo-inositol degradation into acetyl-CoA; acetyl-CoA from myo-inositol: step 7/7. Its function is as follows. Catalyzes the oxidation of malonate semialdehyde (MSA) and methylmalonate semialdehyde (MMSA) into acetyl-CoA and propanoyl-CoA, respectively. Is involved in a myo-inositol catabolic pathway. Bicarbonate, and not CO2, is the end-product of the enzymatic reaction. This Bacillus thuringiensis (strain Al Hakam) protein is Malonate-semialdehyde dehydrogenase 1.